A 178-amino-acid chain; its full sequence is Ribosome maturation factor RimM (178 aa).

Residues 94-174 (KNEFFWFDLI…RIDVINSFDI (81 aa)) form the PRC barrel domain.

It belongs to the RimM family. Binds ribosomal protein uS19.

The protein resides in the cytoplasm. Functionally, an accessory protein needed during the final step in the assembly of 30S ribosomal subunit, possibly for assembly of the head region. Essential for efficient processing of 16S rRNA. May be needed both before and after RbfA during the maturation of 16S rRNA. It has affinity for free ribosomal 30S subunits but not for 70S ribosomes. The polypeptide is Ribosome maturation factor RimM (Aliarcobacter butzleri (strain RM4018) (Arcobacter butzleri)).